Consider the following 76-residue polypeptide: FMRFamide-related neuropeptides (76 aa).

An N-terminal signal peptide occupies residues 1–27; sequence MCVQTRMLVAVAVVLVVLAVLSDPVSA. Phe-39 carries the post-translational modification Phenylalanine amide.

This sequence belongs to the FARP (FMRFamide related peptide) family. In terms of tissue distribution, olfactory lobe and accessory lobe, olfactory globular tract, olfactory lobe cells (at protein level). Widely distributed throughout nervous system.

It localises to the secreted. Functionally, GYRKPPFNGSIF-amide may be involved in olfaction and contraction of hindgut. This Procambarus clarkii (Red swamp crayfish) protein is FMRFamide-related neuropeptides.